A 308-amino-acid chain; its full sequence is MTHLFALSELPLDEIHRLLDEAEAFRSGRIWRPAAPMYVANLFFEPSTRTKCSFEMAERKLGLHVIPFDPERSSVQKGETLYDTVRTLEAIGVDAVVIRHHEDAYFEALRHAVGIPIINAGDGCGHHPTQSLLDLLTIRQEFGAFTGLTVAIIGDIRHSRVARSNAEVLTRLGANVLFSGPAEWKDETNPYGTYVEVDEAIARADVVMLLRIQHERHAETMGLTKEEYHARYGLTLERARRMKSGAIILHPAPVNRGVEIASELVEAKASRIFKQMENGVYVRMAVLKRAMEGRMEHGRMAEKWHVVQ.

Carbamoyl phosphate contacts are provided by arginine 49 and threonine 50. Lysine 77 contributes to the L-aspartate binding site. Carbamoyl phosphate contacts are provided by arginine 99, histidine 127, and glutamine 130. Residues arginine 160 and arginine 211 each contribute to the L-aspartate site. The carbamoyl phosphate site is built by alanine 252 and proline 253.

The protein belongs to the aspartate/ornithine carbamoyltransferase superfamily. ATCase family. As to quaternary structure, heterododecamer (2C3:3R2) of six catalytic PyrB chains organized as two trimers (C3), and six regulatory PyrI chains organized as three dimers (R2).

It catalyses the reaction carbamoyl phosphate + L-aspartate = N-carbamoyl-L-aspartate + phosphate + H(+). It participates in pyrimidine metabolism; UMP biosynthesis via de novo pathway; (S)-dihydroorotate from bicarbonate: step 2/3. Catalyzes the condensation of carbamoyl phosphate and aspartate to form carbamoyl aspartate and inorganic phosphate, the committed step in the de novo pyrimidine nucleotide biosynthesis pathway. This Geobacillus kaustophilus (strain HTA426) protein is Aspartate carbamoyltransferase catalytic subunit.